The primary structure comprises 303 residues: Aspartate carbamoyltransferase catalytic subunit (303 aa).

Carbamoyl phosphate-binding residues include R51 and T52. K80 contacts L-aspartate. Carbamoyl phosphate contacts are provided by R101, H129, and Q132. Residues R162 and R221 each contribute to the L-aspartate site. The carbamoyl phosphate site is built by L260 and P261.

This sequence belongs to the aspartate/ornithine carbamoyltransferase superfamily. ATCase family. Heterooligomer of catalytic and regulatory chains.

It catalyses the reaction carbamoyl phosphate + L-aspartate = N-carbamoyl-L-aspartate + phosphate + H(+). Its pathway is pyrimidine metabolism; UMP biosynthesis via de novo pathway; (S)-dihydroorotate from bicarbonate: step 2/3. Its function is as follows. Catalyzes the condensation of carbamoyl phosphate and aspartate to form carbamoyl aspartate and inorganic phosphate, the committed step in the de novo pyrimidine nucleotide biosynthesis pathway. The sequence is that of Aspartate carbamoyltransferase catalytic subunit from Saccharolobus islandicus (strain Y.N.15.51 / Yellowstone #2) (Sulfolobus islandicus).